The following is a 420-amino-acid chain: Riboflavin biosynthesis protein RibBA (420 aa).

The DHBP synthase stretch occupies residues 1-202; that stretch reads MTTFGTIEQA…IADLVAYRRR (202 aa). D-ribulose 5-phosphate is bound by residues 28–29, Asp-33, 141–145, and Glu-165; these read RE and RPGHT. Position 29 (Glu-29) interacts with Mg(2+). His-144 contacts Mg(2+). The tract at residues 203–420 is GTP cyclohydrolase II; the sequence is TEKQVELVAE…RAVVGDGIGA (218 aa). 253–257 contributes to the GTP binding site; it reads RVHSE. Positions 258, 269, and 271 each coordinate Zn(2+). GTP contacts are provided by residues Gln-274, 297 to 299, and Thr-319; that span reads EGR. The Proton acceptor; for GTP cyclohydrolase activity role is filled by Asp-331. Arg-333 functions as the Nucleophile; for GTP cyclohydrolase activity in the catalytic mechanism. Residues Thr-354 and Lys-359 each coordinate GTP.

It in the N-terminal section; belongs to the DHBP synthase family. This sequence in the C-terminal section; belongs to the GTP cyclohydrolase II family. Mg(2+) serves as cofactor. Mn(2+) is required as a cofactor. The cofactor is Zn(2+).

It carries out the reaction D-ribulose 5-phosphate = (2S)-2-hydroxy-3-oxobutyl phosphate + formate + H(+). The enzyme catalyses GTP + 4 H2O = 2,5-diamino-6-hydroxy-4-(5-phosphoribosylamino)-pyrimidine + formate + 2 phosphate + 3 H(+). It functions in the pathway cofactor biosynthesis; riboflavin biosynthesis; 2-hydroxy-3-oxobutyl phosphate from D-ribulose 5-phosphate: step 1/1. The protein operates within cofactor biosynthesis; riboflavin biosynthesis; 5-amino-6-(D-ribitylamino)uracil from GTP: step 1/4. Its function is as follows. Catalyzes the conversion of D-ribulose 5-phosphate to formate and 3,4-dihydroxy-2-butanone 4-phosphate. Catalyzes the conversion of GTP to 2,5-diamino-6-ribosylamino-4(3H)-pyrimidinone 5'-phosphate (DARP), formate and pyrophosphate. This is Riboflavin biosynthesis protein RibBA from Salinispora arenicola (strain CNS-205).